The primary structure comprises 192 residues: Pyridoxal 5'-phosphate synthase subunit PdxT (192 aa).

Position 47 to 49 (47 to 49) interacts with L-glutamine; it reads GES. C79 (nucleophile) is an active-site residue. L-glutamine is bound by residues R106 and 134 to 135; that span reads IR. Residues H170 and E172 each act as charge relay system in the active site.

This sequence belongs to the glutaminase PdxT/SNO family. In the presence of PdxS, forms a dodecamer of heterodimers. Only shows activity in the heterodimer.

It carries out the reaction aldehydo-D-ribose 5-phosphate + D-glyceraldehyde 3-phosphate + L-glutamine = pyridoxal 5'-phosphate + L-glutamate + phosphate + 3 H2O + H(+). The enzyme catalyses L-glutamine + H2O = L-glutamate + NH4(+). The protein operates within cofactor biosynthesis; pyridoxal 5'-phosphate biosynthesis. Catalyzes the hydrolysis of glutamine to glutamate and ammonia as part of the biosynthesis of pyridoxal 5'-phosphate. The resulting ammonia molecule is channeled to the active site of PdxS. The sequence is that of Pyridoxal 5'-phosphate synthase subunit PdxT from Anoxybacillus flavithermus (strain DSM 21510 / WK1).